The chain runs to 643 residues: RNA-binding protein MEX3D (643 aa).

Disordered stretches follow at residues 1–48 (MPGS…DAAA) and 61–92 (GLGG…APPD). The segment covering 18–34 (TAGDPGHPHPALAGAED) has biased composition (low complexity). Positions 83–92 (CGEDEPAPPD) are enriched in acidic residues. 2 KH domains span residues 160-221 (MTEC…KREI) and 253-314 (QTTI…REEI). Disordered stretches follow at residues 357–427 (PHPG…GTAT), 471–505 (GAPA…GGLS), and 519–583 (VGAV…APGP). Residues 405-418 (GGSGNGGFTFGGDG) show a composition bias toward gly residues. Thr491 bears the Phosphothreonine mark. A Phosphoserine modification is found at Ser495. Composition is skewed to low complexity over residues 495–505 (SPTLPEPGGLS), 531–556 (LPPF…SSTL), and 567–583 (PSTT…APGP). The RING-type zinc-finger motif lies at 592-632 (CVVCSEGEAMAALVPCGHNLFCMDCAVRICGKSEPECPACR).

It is found in the cytoplasm. It localises to the nucleus. In terms of biological role, RNA binding protein, may be involved in post-transcriptional regulatory mechanisms. This is RNA-binding protein MEX3D (Mex3d) from Mus musculus (Mouse).